The sequence spans 328 residues: Sterol demethylase protein B (328 aa).

It belongs to the NAD(P)-dependent epimerase/dehydratase family.

It catalyses the reaction a 3beta-hydroxy-4alpha-methylsteroid-4beta-carboxylate + NAD(+) = a 4alpha-methyl-3-oxosteroid + CO2 + NADH. It carries out the reaction a 3beta-hydroxy-4alpha-methylsteroid-4beta-carboxylate + NADP(+) = a 4alpha-methyl-3-oxosteroid + CO2 + NADPH. The catalysed reaction is 4beta-carboxy-4alpha-methyl-5alpha-cholesta-8,24-dien-3beta-ol + NAD(+) = 3-dehydro-4alpha-methylzymosterol + CO2 + NADH. The enzyme catalyses 4beta-carboxy-4alpha-methyl-5alpha-cholesta-8,24-dien-3beta-ol + NADP(+) = 3-dehydro-4alpha-methylzymosterol + CO2 + NADPH. It catalyses the reaction 3-dehydro-4alpha-methylzymosterol + NADPH + H(+) = 4alpha-methylzymosterol + NADP(+). The protein operates within steroid biosynthesis; sterol biosynthesis. Functionally, participates in the biosynthesis of bacterial sterols. Together with SdmA, removes one methyl group from the C-4 position of 4,4-dimethylated steroid molecules. SdmB catalyzes an oxidative decarboxylation that results in reduction of the 3beta-hydroxy group at the C-3 carbon to an oxo group. It also functions as a ketoreductase that converts the C-3 oxo group back to a hydroxyl group after C-4 demethylation. In Methylococcus capsulatus (strain ATCC 33009 / NCIMB 11132 / Bath), this protein is Sterol demethylase protein B.